The primary structure comprises 387 residues: MSWWYRRSIGETEQKRIEINGVSPTYQSVALIVGVTGIAGSGLAETLSFSDTPGGPWKVYGVARRPCPKWLAKLNVNYVQCDIANTDETYSKVAPLTDITHIFYVSWTGSEDVALNTLMFKNILDSVIPNAPNLKHVSLQTGIKYYWGNMAEMDSTNQPHECPFYENMPRLKQDNFYYNLEDLVYDSAVRKNGLSWSIHRPALIFGFSPCSMMNTVSTLCVYAAICKHENKPLVYTGTETSWTCLWDAVDSDLLAEHFLWAATVPNAKNQAFNINNGDVFKWKHMWKVLAKEFDIEAIGYEGKEPVLLEDLMKDKDSVWDEIVKKHDLVPTKLRDIAAFWLADVVFRNKETLCSMNKNKEFGFMGFRDTTKSFVSSINKMRDFKFIP.

NADP(+)-binding positions include threonine 36–isoleucine 38, arginine 64–arginine 65, aspartate 82–isoleucine 83, serine 106–tryptophan 107, and glutamine 140. Residues lysine 144 and tyrosine 177 contribute to the active site. Substrate contacts are provided by lysine 144 and tyrosine 177. NADP(+) is bound by residues tyrosine 177 and serine 211–methionine 213.

The protein belongs to the short-chain dehydrogenases/reductases (SDR) family. Highly divergent. In terms of tissue distribution, expressed in leaves.

It carries out the reaction (S)-8-oxocitronellyl enol + NADP(+) = (6E)-8-oxogeranial + NADPH + H(+). It catalyses the reaction (S)-8-oxocitronellyl enol + NAD(+) = (6E)-8-oxogeranial + NADH + H(+). The enzyme catalyses (R)-8-oxocitronellyl enol + NADP(+) = (6E)-8-oxogeranial + NADPH + H(+). Functionally, iridoid synthase that catalyzes the first step in generation of the iridoid ring scaffold using the linear monoterpene (6E)-8-oxogeranial as substrate. Reduces 8-oxogeranial, generating an unstable product that is subsequently cyclized into several possible products, either non-enzymically or by dedicated cyclases. Iridoids comprise a large family of distinctive bicyclic monoterpenes that possess a wide range of pharmacological activities, including anticancer, anti-inflammatory, antifungal and antibacterial activities. This Antirrhinum majus (Garden snapdragon) protein is (S)-8-oxocitronellyl enol synthase.